The following is a 568-amino-acid chain: Urease subunit alpha (568 aa).

In terms of domain architecture, Urease spans 131–568 (GGIDTHIHFI…LPMAQRYFLF (438 aa)). His136, His138, and Lys219 together coordinate Ni(2+). At Lys219 the chain carries N6-carboxylysine. Residue His221 coordinates substrate. Ni(2+)-binding residues include His248 and His274. The active-site Proton donor is His322. Asp362 is a binding site for Ni(2+).

The protein belongs to the metallo-dependent hydrolases superfamily. Urease alpha subunit family. In terms of assembly, heterotrimer of UreA (gamma), UreB (beta) and UreC (alpha) subunits. Three heterotrimers associate to form the active enzyme. The cofactor is Ni cation. Post-translationally, carboxylation allows a single lysine to coordinate two nickel ions.

It is found in the cytoplasm. The enzyme catalyses urea + 2 H2O + H(+) = hydrogencarbonate + 2 NH4(+). It functions in the pathway nitrogen metabolism; urea degradation; CO(2) and NH(3) from urea (urease route): step 1/1. The chain is Urease subunit alpha from Nostoc sp. (strain PCC 7120 / SAG 25.82 / UTEX 2576).